Reading from the N-terminus, the 41-residue chain is Large ribosomal subunit protein bL36 (41 aa).

It belongs to the bacterial ribosomal protein bL36 family.

The chain is Large ribosomal subunit protein bL36 from Jannaschia sp. (strain CCS1).